The chain runs to 654 residues: tRNA 5-methylaminomethyl-2-thiouridine biosynthesis bifunctional protein MnmC (654 aa).

The tRNA (mnm(5)s(2)U34)-methyltransferase stretch occupies residues 1 to 235 (MSDFQHAQLD…KREMLSGTYQ (235 aa)). The segment at 261–654 (VGGGLAGCAS…LRDLVRGQRG (394 aa)) is FAD-dependent cmnm(5)s(2)U34 oxidoreductase.

It in the N-terminal section; belongs to the methyltransferase superfamily. tRNA (mnm(5)s(2)U34)-methyltransferase family. This sequence in the C-terminal section; belongs to the DAO family. FAD is required as a cofactor.

The protein localises to the cytoplasm. The catalysed reaction is 5-aminomethyl-2-thiouridine(34) in tRNA + S-adenosyl-L-methionine = 5-methylaminomethyl-2-thiouridine(34) in tRNA + S-adenosyl-L-homocysteine + H(+). Its function is as follows. Catalyzes the last two steps in the biosynthesis of 5-methylaminomethyl-2-thiouridine (mnm(5)s(2)U) at the wobble position (U34) in tRNA. Catalyzes the FAD-dependent demodification of cmnm(5)s(2)U34 to nm(5)s(2)U34, followed by the transfer of a methyl group from S-adenosyl-L-methionine to nm(5)s(2)U34, to form mnm(5)s(2)U34. In Pseudomonas aeruginosa (strain ATCC 15692 / DSM 22644 / CIP 104116 / JCM 14847 / LMG 12228 / 1C / PRS 101 / PAO1), this protein is tRNA 5-methylaminomethyl-2-thiouridine biosynthesis bifunctional protein MnmC.